The primary structure comprises 493 residues: Cardiolipin synthase 1 (493 aa).

The next 2 helical transmembrane spans lie at 13–33 (FTIILAIGFIINLVLAFIIIF) and 45–65 (WAWLFVLFVLPLIGFILYLFF). 2 PLD phosphodiesterase domains span residues 228–255 (MNNRNHRKIIIIDGQLGYVGGFNIGDEY) and 406–433 (ENGFIHSKMCLIDDEIVSVGTANMDFRS). Active-site residues include His-233, Lys-235, Asp-240, His-411, Lys-413, and Asp-418.

This sequence belongs to the phospholipase D family. Cardiolipin synthase subfamily.

Its subcellular location is the cell membrane. The enzyme catalyses 2 a 1,2-diacyl-sn-glycero-3-phospho-(1'-sn-glycerol) = a cardiolipin + glycerol. In terms of biological role, catalyzes the reversible phosphatidyl group transfer from one phosphatidylglycerol molecule to another to form cardiolipin (CL) (diphosphatidylglycerol) and glycerol. This Staphylococcus aureus (strain MRSA252) protein is Cardiolipin synthase 1 (cls1).